The sequence spans 312 residues: MTTEDTQYAHQPVMLEEVLDMWFSQSEGFYVDGTFGRGGHSRALLSRLGENGRLIGIDRDPQAIAAGQQLAASDSRFHMMAGRFDCLPQAVEQAGRPIDGLLLDLGVSSPQLDDAARGFSFLRDGPLDMRMDPTQGESVAEWLSYAAEKDIANVLYRYGEERKSRWIAKRICETRKEQPITRTLQLADLIESVLGRNEQGKHPATRSFQALRIHINGELDALDQVLEQSLETLAIGGRLAIISFHSLEDRIVKLFIRDHSGRAPKGRGGLPLGDELPQRLEPVGKVMRASKAELKVNVRSRSAVLRIAEKVA.

S-adenosyl-L-methionine contacts are provided by residues 38–40 (GGH), aspartate 58, phenylalanine 84, aspartate 104, and glutamine 111.

It belongs to the methyltransferase superfamily. RsmH family.

The protein localises to the cytoplasm. The enzyme catalyses cytidine(1402) in 16S rRNA + S-adenosyl-L-methionine = N(4)-methylcytidine(1402) in 16S rRNA + S-adenosyl-L-homocysteine + H(+). Functionally, specifically methylates the N4 position of cytidine in position 1402 (C1402) of 16S rRNA. This Alcanivorax borkumensis (strain ATCC 700651 / DSM 11573 / NCIMB 13689 / SK2) protein is Ribosomal RNA small subunit methyltransferase H.